The primary structure comprises 477 residues: Salivary plasminogen activator alpha 2 (477 aa).

A signal peptide spans 1–36 (MVNTMKTKLLCVLLLCGAVFSLPRQETYRQLARGSR). Residues 40-82 (VACRDEKTQMIYQQQESWLRPEVRSKRVEHCRCDRGLAQCHTV) enclose the Fibronectin type-I domain. Intrachain disulfides connect C42-C72, C70-C79, C87-C98, C92-C109, C111-C120, C128-C209, C149-C191, C180-C204, C214-C345, C257-C273, C265-C334, C359-C434, C391-C407, and C424-C452. Positions 83 to 121 (PVKSCSELRCFNGGTCWQAASFSDFVCQCPKGYTGKQCE) constitute an EGF-like domain. Residues 128 to 209 (CYKDQGVTYR…ILEFCSVPVC (82 aa)) enclose the Kringle domain. Residue N185 is glycosylated (N-linked (GlcNAc...) asparagine). Positions 226-476 (STGGLFTDIT…YLGWIRDNMR (251 aa)) constitute a Peptidase S1 domain. Catalysis depends on charge relay system residues H272 and D321. N398 carries an N-linked (GlcNAc...) asparagine glycan. S428 acts as the Charge relay system in catalysis.

This sequence belongs to the peptidase S1 family. In terms of assembly, monomer.

It is found in the secreted. It catalyses the reaction Specific cleavage of Arg-|-Val bond in plasminogen to form plasmin.. With respect to regulation, activity toward plasminogen is stimulated in the presence of fibrin I. Its function is as follows. Probably essential to support the feeding habits of this exclusively haematophagous animal. Probable potent thrombolytic agent. In Desmodus rotundus (Vampire bat), this protein is Salivary plasminogen activator alpha 2.